Reading from the N-terminus, the 343-residue chain is Anthranilate phosphoribosyltransferase (343 aa).

5-phospho-alpha-D-ribose 1-diphosphate-binding positions include glycine 84, 87-88, threonine 92, 94-97, 112-120, and serine 124; these read GD, NIST, and KHGNRSASS. Glycine 84 serves as a coordination point for anthranilate. Serine 96 serves as a coordination point for Mg(2+). Residue asparagine 115 participates in anthranilate binding. Arginine 170 is a binding site for anthranilate. Residues aspartate 229 and glutamate 230 each contribute to the Mg(2+) site.

This sequence belongs to the anthranilate phosphoribosyltransferase family. In terms of assembly, homodimer. It depends on Mg(2+) as a cofactor.

It carries out the reaction N-(5-phospho-beta-D-ribosyl)anthranilate + diphosphate = 5-phospho-alpha-D-ribose 1-diphosphate + anthranilate. The protein operates within amino-acid biosynthesis; L-tryptophan biosynthesis; L-tryptophan from chorismate: step 2/5. In terms of biological role, catalyzes the transfer of the phosphoribosyl group of 5-phosphorylribose-1-pyrophosphate (PRPP) to anthranilate to yield N-(5'-phosphoribosyl)-anthranilate (PRA). The protein is Anthranilate phosphoribosyltransferase of Bordetella avium (strain 197N).